The chain runs to 150 residues: 3-hydroxyacyl-[acyl-carrier-protein] dehydratase FabZ (150 aa).

H54 is a catalytic residue.

This sequence belongs to the thioester dehydratase family. FabZ subfamily.

The protein localises to the cytoplasm. The catalysed reaction is a (3R)-hydroxyacyl-[ACP] = a (2E)-enoyl-[ACP] + H2O. In terms of biological role, involved in unsaturated fatty acids biosynthesis. Catalyzes the dehydration of short chain beta-hydroxyacyl-ACPs and long chain saturated and unsaturated beta-hydroxyacyl-ACPs. In Vibrio atlanticus (strain LGP32) (Vibrio splendidus (strain Mel32)), this protein is 3-hydroxyacyl-[acyl-carrier-protein] dehydratase FabZ.